Here is a 385-residue protein sequence, read N- to C-terminus: S-adenosylmethionine synthase (385 aa).

Position 16 (histidine 16) interacts with ATP. Aspartate 18 lines the Mg(2+) pocket. Glutamate 44 contributes to the K(+) binding site. L-methionine-binding residues include glutamate 57 and glutamine 100. Positions 100–110 are flexible loop; it reads QSPDINQGVDR. Residues 164 to 166, 230 to 231, aspartate 239, 245 to 246, alanine 262, and lysine 266 contribute to the ATP site; these read DGK, KF, and RK. Residue aspartate 239 participates in L-methionine binding. Lysine 270 serves as a coordination point for L-methionine.

The protein belongs to the AdoMet synthase family. Homotetramer; dimer of dimers. The cofactor is Mg(2+). It depends on K(+) as a cofactor.

The protein resides in the cytoplasm. The catalysed reaction is L-methionine + ATP + H2O = S-adenosyl-L-methionine + phosphate + diphosphate. Its pathway is amino-acid biosynthesis; S-adenosyl-L-methionine biosynthesis; S-adenosyl-L-methionine from L-methionine: step 1/1. Its function is as follows. Catalyzes the formation of S-adenosylmethionine (AdoMet) from methionine and ATP. The overall synthetic reaction is composed of two sequential steps, AdoMet formation and the subsequent tripolyphosphate hydrolysis which occurs prior to release of AdoMet from the enzyme. The protein is S-adenosylmethionine synthase of Helicobacter pylori (strain ATCC 700392 / 26695) (Campylobacter pylori).